We begin with the raw amino-acid sequence, 126 residues long: Small ribosomal subunit protein uS13 (126 aa).

Residues asparagine 95–lysine 126 form a disordered region.

This sequence belongs to the universal ribosomal protein uS13 family. Part of the 30S ribosomal subunit. Forms a loose heterodimer with protein S19. Forms two bridges to the 50S subunit in the 70S ribosome.

In terms of biological role, located at the top of the head of the 30S subunit, it contacts several helices of the 16S rRNA. In the 70S ribosome it contacts the 23S rRNA (bridge B1a) and protein L5 of the 50S subunit (bridge B1b), connecting the 2 subunits; these bridges are implicated in subunit movement. Contacts the tRNAs in the A and P-sites. The polypeptide is Small ribosomal subunit protein uS13 (Frankia casuarinae (strain DSM 45818 / CECT 9043 / HFP020203 / CcI3)).